A 134-amino-acid polypeptide reads, in one-letter code: uncharacterized protein (134 aa).

A run of 2 helical transmembrane segments spans residues 16-36 (IFSF…NTKL) and 43-63 (IAYF…IHGT).

This sequence belongs to the plectrovirus ORF5 family.

The protein resides in the host membrane. This is an uncharacterized protein from Spiroplasma citri (SpV1).